The sequence spans 491 residues: 2-aminomuconic 6-semialdehyde dehydrogenase (491 aa).

Active-site residues include Glu-252 and Cys-286.

It belongs to the aldehyde dehydrogenase family. In terms of assembly, homotrimer.

It carries out the reaction 2-aminomuconate 6-semialdehyde + NAD(+) + H2O = (2Z,4E)-2-aminomuconate + NADH + 2 H(+). Its activity is regulated as follows. Strongly inhibited by Ag(+) and Hg(+), and comnpletely inhibited by p-chloromercuribenzoic acid. In terms of biological role, involved in the modified meta-cleavage pathway for 2-aminophenol catabolism. The enzyme is also active toward 2-hydroxymuconic 6-semialdehyde, acetaldehyde, propionaldehyde, and butyraldehyde. The sequence is that of 2-aminomuconic 6-semialdehyde dehydrogenase (amnC) from Pseudomonas sp.